Consider the following 394-residue polypeptide: Phosphopentomutase (394 aa).

The Mn(2+) site is built by aspartate 13, aspartate 286, histidine 291, aspartate 327, histidine 328, and histidine 339.

It belongs to the phosphopentomutase family. It depends on Mn(2+) as a cofactor.

The protein localises to the cytoplasm. The catalysed reaction is 2-deoxy-alpha-D-ribose 1-phosphate = 2-deoxy-D-ribose 5-phosphate. It carries out the reaction alpha-D-ribose 1-phosphate = D-ribose 5-phosphate. Its pathway is carbohydrate degradation; 2-deoxy-D-ribose 1-phosphate degradation; D-glyceraldehyde 3-phosphate and acetaldehyde from 2-deoxy-alpha-D-ribose 1-phosphate: step 1/2. Its function is as follows. Isomerase that catalyzes the conversion of deoxy-ribose 1-phosphate (dRib-1-P) and ribose 1-phosphate (Rib-1-P) to deoxy-ribose 5-phosphate (dRib-5-P) and ribose 5-phosphate (Rib-5-P), respectively. The protein is Phosphopentomutase of Bacillus cereus (strain AH187).